The chain runs to 95 residues: Putative RelE-like toxin protein (95 aa).

Belongs to the RelE toxin family.

Toxic component of a type II toxin-antitoxin (TA) system. This Escherichia coli protein is Putative RelE-like toxin protein.